A 375-amino-acid polypeptide reads, in one-letter code: Succinyl-diaminopimelate desuccinylase (375 aa).

Zn(2+) is bound at residue His-66. Asp-68 is a catalytic residue. Asp-99 contributes to the Zn(2+) binding site. Glu-133 serves as the catalytic Proton acceptor. Residues Glu-134, Glu-162, and His-348 each coordinate Zn(2+).

It belongs to the peptidase M20A family. DapE subfamily. As to quaternary structure, homodimer. Requires Zn(2+) as cofactor. Co(2+) is required as a cofactor.

It carries out the reaction N-succinyl-(2S,6S)-2,6-diaminopimelate + H2O = (2S,6S)-2,6-diaminopimelate + succinate. It functions in the pathway amino-acid biosynthesis; L-lysine biosynthesis via DAP pathway; LL-2,6-diaminopimelate from (S)-tetrahydrodipicolinate (succinylase route): step 3/3. Its function is as follows. Catalyzes the hydrolysis of N-succinyl-L,L-diaminopimelic acid (SDAP), forming succinate and LL-2,6-diaminopimelate (DAP), an intermediate involved in the bacterial biosynthesis of lysine and meso-diaminopimelic acid, an essential component of bacterial cell walls. In Photorhabdus laumondii subsp. laumondii (strain DSM 15139 / CIP 105565 / TT01) (Photorhabdus luminescens subsp. laumondii), this protein is Succinyl-diaminopimelate desuccinylase.